The chain runs to 112 residues: uncharacterized protein (112 aa).

The protein to Buchnera BU585.

This is an uncharacterized protein from Buchnera aphidicola subsp. Schizaphis graminum (strain Sg).